The primary structure comprises 338 residues: Dehydrogenase/reductase SDR family member 7 (338 aa).

The first 28 residues, 1–28, serve as a signal peptide directing secretion; sequence MSWELLLWLLALCALILPLVQLLRFLRA. NAD(+)-binding residues include Ser60 and Ile62. Ser190 lines the substrate pocket. Residues Tyr203, Lys207, and Ser239 each contribute to the NAD(+) site. The Proton acceptor role is filled by Tyr203.

The protein belongs to the short-chain dehydrogenases/reductases (SDR) family.

Its subcellular location is the endoplasmic reticulum membrane. It carries out the reaction all-trans-retinol + NADP(+) = all-trans-retinal + NADPH + H(+). The enzyme catalyses 5alpha-androstane-3alpha,17beta-diol + NADP(+) = 17beta-hydroxy-5alpha-androstan-3-one + NADPH + H(+). NADPH-dependent oxidoreductase which catalyzes the reduction of a variety of compounds bearing carbonyl groups including steroids, retinoids and xenobiotics. Catalyzes the reduction/inactivation of 5alpha-dihydrotestosterone to 3alpha-androstanediol, with a possible role in the modulation of androgen receptor function. Involved in the reduction of all-trans-retinal to all-trans-retinol. Converts cortisone to 20beta-dihydrocortisone in vitro, although the physiological relevance of this activity is questionable. Reduces exogenous compounds such as quinones (1,2-naphtoquinone, 9,10-phenantrenequinone and benzoquinone) and other xenobiotics (alpha-diketones) in vitro, suggesting a role in the biotransformation of xenobiotics with carbonyl group. A dehydrogenase activity has not been detected so far. May play a role as tumor suppressor. The chain is Dehydrogenase/reductase SDR family member 7 from Mus musculus (Mouse).